The primary structure comprises 810 residues: Phenylalanine--tRNA ligase beta subunit (810 aa).

The tRNA-binding domain occupies 39 to 154 (APPTEKIVVG…EGTPVGQDIR (116 aa)). The B5 domain maps to 405–480 (PQRAPVSMRA…RIYGFEKIPA (76 aa)). Aspartate 458, aspartate 464, glutamate 467, and glutamate 468 together coordinate Mg(2+). Residues 707–809 (SKFPPVRRDI…MARVYGARLR (103 aa)) form the FDX-ACB domain.

The protein belongs to the phenylalanyl-tRNA synthetase beta subunit family. Type 1 subfamily. In terms of assembly, tetramer of two alpha and two beta subunits. Mg(2+) is required as a cofactor.

It localises to the cytoplasm. It carries out the reaction tRNA(Phe) + L-phenylalanine + ATP = L-phenylalanyl-tRNA(Phe) + AMP + diphosphate + H(+). The chain is Phenylalanine--tRNA ligase beta subunit from Burkholderia pseudomallei (strain 1710b).